The sequence spans 246 residues: MKKKNSIIFVFMILFFNSTVQSQSFKKNYFTERYTLYEKSNKELRKENFDNAISILEKIKKNNNTANISNDKIQIDLIYAYYKILNFDQARKNIEEFMYFYPNHPNIDYVVYIQCLISMSLDKNRFFSVFPINYYKNDYFYAKNAFFQLKYFIYQYPKSRYVVNAKKNLIYIKNRLSEHDLSILKFYFFHKEYIAVINRGEEMLQRYSETPSARKALIYIEKSYYALKIFDTAKKISKIILLNKIQ.

Residues 1–22 form the signal peptide; that stretch reads MKKKNSIIFVFMILFFNSTVQS.

This sequence belongs to the BamD family. As to quaternary structure, part of the Bam complex.

The protein localises to the cell outer membrane. Its function is as follows. Part of the outer membrane protein assembly complex, which is involved in assembly and insertion of beta-barrel proteins into the outer membrane. The sequence is that of Outer membrane protein assembly factor BamD from Buchnera aphidicola subsp. Acyrthosiphon pisum (strain APS) (Acyrthosiphon pisum symbiotic bacterium).